Reading from the N-terminus, the 291-residue chain is ATP synthase gamma chain (291 aa).

This sequence belongs to the ATPase gamma chain family. F-type ATPases have 2 components, CF(1) - the catalytic core - and CF(0) - the membrane proton channel. CF(1) has five subunits: alpha(3), beta(3), gamma(1), delta(1), epsilon(1). CF(0) has three main subunits: a, b and c.

It is found in the cell inner membrane. Its function is as follows. Produces ATP from ADP in the presence of a proton gradient across the membrane. The gamma chain is believed to be important in regulating ATPase activity and the flow of protons through the CF(0) complex. This is ATP synthase gamma chain from Verminephrobacter eiseniae (strain EF01-2).